Here is a 198-residue protein sequence, read N- to C-terminus: Recombination protein RecR (198 aa).

The segment at 57 to 72 (CTVCGHITDTDPCYIC) adopts a C4-type zinc-finger fold. The Toprim domain maps to 80-175 (TTICVVQDPK…KVTRIAHGLP (96 aa)).

This sequence belongs to the RecR family.

Its function is as follows. May play a role in DNA repair. It seems to be involved in an RecBC-independent recombinational process of DNA repair. It may act with RecF and RecO. The polypeptide is Recombination protein RecR (Geobacillus sp. (strain WCH70)).